Here is a 404-residue protein sequence, read N- to C-terminus: uncharacterized protein (404 aa).

11 helical membrane passes run 15 to 35, 43 to 63, 84 to 104, 121 to 141, 154 to 174, 187 to 207, 231 to 251, 279 to 299, 316 to 336, 338 to 358, and 373 to 393; these read WSLLMGAAFLMATSAIGPGFL, NTLAASFGFVILISIILDIFA, MVLPGLGYFIAILVVLGGLAF, GITPETGALISAVIAILIFVI, IAGFVMIILTVYVAATTAPPV, ISIFAIVTLVGGTVGGYITFA, VVGILITSVMRIALFLAVLGV, IFGLIMWSAAITSVIGAAYTS, GIIIGFIVVSTLAFVTIGQPA, ILVLVGSLNGLILPIALGTLL, and PLWLTSTGALVVIVMAVMGIY.

The protein belongs to the NRAMP family.

It localises to the cell membrane. This is an uncharacterized protein from Bacillus subtilis (strain 168).